The sequence spans 104 residues: Large ribosomal subunit protein uL24 (104 aa).

This sequence belongs to the universal ribosomal protein uL24 family. As to quaternary structure, part of the 50S ribosomal subunit.

Its function is as follows. One of two assembly initiator proteins, it binds directly to the 5'-end of the 23S rRNA, where it nucleates assembly of the 50S subunit. In terms of biological role, one of the proteins that surrounds the polypeptide exit tunnel on the outside of the subunit. The chain is Large ribosomal subunit protein uL24 from Yersinia pseudotuberculosis serotype O:1b (strain IP 31758).